The following is a 241-amino-acid chain: Transcriptional regulatory protein SrrA (241 aa).

The 114-residue stretch at 4–117 (EILIVDDEDR…EVVLRVKALL (114 aa)) folds into the Response regulatory domain. Asp-53 is subject to 4-aspartylphosphate. A DNA-binding region (ompR/PhoB-type) is located at residues 133 to 233 (RDVIEFKHLE…VWGVGYKFEV (101 aa)).

Post-translationally, phosphorylated by SrrB.

It localises to the cytoplasm. In terms of biological role, member of the two-component regulatory system SrrA/SrrB, which is involved in the global regulation of staphylococcal virulence factors in response to environmental oxygen levels as well as biofilm formation. Also plays an essential role in host-derived nitric oxide resistance by regulating hmp/flavohemoglobin, an enzyme that detoxifies nitric oxide by converting it to nitrate. Functions as a transcription regulator by direct binding to promoter regions of target genes. This chain is Transcriptional regulatory protein SrrA (srrA), found in Staphylococcus aureus (strain NCTC 8325 / PS 47).